We begin with the raw amino-acid sequence, 104 residues long: Late embryogenis abundant protein 41 (104 aa).

The transit peptide at 1–31 (MAARSLSGAVKSLCSAASGSLSCSIVLRRSY) directs the protein to the mitochondrion.

The protein belongs to the LEA type 3 family.

The protein resides in the mitochondrion. The chain is Late embryogenis abundant protein 41 from Arabidopsis thaliana (Mouse-ear cress).